The chain runs to 470 residues: ATP synthase subunit beta (470 aa).

An ATP-binding site is contributed by Gly-155–Thr-162.

The protein belongs to the ATPase alpha/beta chains family. In terms of assembly, F-type ATPases have 2 components, CF(1) - the catalytic core - and CF(0) - the membrane proton channel. CF(1) has five subunits: alpha(3), beta(3), gamma(1), delta(1), epsilon(1). CF(0) has three main subunits: a(1), b(2) and c(9-12). The alpha and beta chains form an alternating ring which encloses part of the gamma chain. CF(1) is attached to CF(0) by a central stalk formed by the gamma and epsilon chains, while a peripheral stalk is formed by the delta and b chains.

The protein resides in the cell membrane. It carries out the reaction ATP + H2O + 4 H(+)(in) = ADP + phosphate + 5 H(+)(out). Its function is as follows. Produces ATP from ADP in the presence of a proton gradient across the membrane. The catalytic sites are hosted primarily by the beta subunits. The protein is ATP synthase subunit beta of Staphylococcus aureus (strain MW2).